The chain runs to 164 residues: MSYYDNILEIDSNLDGNGLCIGIVMSRFNIDVSEGLLGACTAELTRLGVQEADIVLTTVPGALEIPVALQKLAESDRFDALIALGAVIRGETYHFEVVANESARGLAAVGREYNIPIANGILTTDDEDQATARMAEKGGETARVAIEMANLVLTLDEMDQSAPT.

5-amino-6-(D-ribitylamino)uracil is bound by residues phenylalanine 28, 62-64 (ALE), and 86-88 (AVI). 91–92 (ET) is a (2S)-2-hydroxy-3-oxobutyl phosphate binding site. Residue histidine 94 is the Proton donor of the active site. Asparagine 119 contacts 5-amino-6-(D-ribitylamino)uracil. (2S)-2-hydroxy-3-oxobutyl phosphate is bound at residue arginine 133.

Belongs to the DMRL synthase family.

It carries out the reaction (2S)-2-hydroxy-3-oxobutyl phosphate + 5-amino-6-(D-ribitylamino)uracil = 6,7-dimethyl-8-(1-D-ribityl)lumazine + phosphate + 2 H2O + H(+). The protein operates within cofactor biosynthesis; riboflavin biosynthesis; riboflavin from 2-hydroxy-3-oxobutyl phosphate and 5-amino-6-(D-ribitylamino)uracil: step 1/2. Its function is as follows. Catalyzes the formation of 6,7-dimethyl-8-ribityllumazine by condensation of 5-amino-6-(D-ribitylamino)uracil with 3,4-dihydroxy-2-butanone 4-phosphate. This is the penultimate step in the biosynthesis of riboflavin. This Nitrosomonas europaea (strain ATCC 19718 / CIP 103999 / KCTC 2705 / NBRC 14298) protein is 6,7-dimethyl-8-ribityllumazine synthase.